Reading from the N-terminus, the 326-residue chain is Malate dehydrogenase (326 aa).

12-18 (GAAGQIA) is an NAD(+) binding site. Substrate-binding residues include arginine 93 and arginine 99. Residues asparagine 106, glutamine 113, and 130–132 (VGN) each bind NAD(+). Substrate is bound by residues asparagine 132 and arginine 163. The Proton acceptor role is filled by histidine 188.

The protein belongs to the LDH/MDH superfamily. MDH type 2 family.

The catalysed reaction is (S)-malate + NAD(+) = oxaloacetate + NADH + H(+). Functionally, catalyzes the reversible oxidation of malate to oxaloacetate. The chain is Malate dehydrogenase from Corynebacterium diphtheriae (strain ATCC 700971 / NCTC 13129 / Biotype gravis).